Here is a 209-residue protein sequence, read N- to C-terminus: Mei4-dependent protein 1 (209 aa).

An N-terminal signal peptide occupies residues Met1–Ser22.

The protein localises to the secreted. This Schizosaccharomyces pombe (strain 972 / ATCC 24843) (Fission yeast) protein is Mei4-dependent protein 1 (mde1).